We begin with the raw amino-acid sequence, 188 residues long: Ion-translocating oxidoreductase complex subunit B (188 aa).

Positions 1–23 are hydrophobic; that stretch reads MIEAAVSMSALGLGLGLLLGVAA. The 4Fe-4S domain occupies 29–88; that stretch reads ESPPILDAIEGILPGTNCGACGYPGCRGLAEAMSEGAAPVTACAPGGRDVALALAAIVET. [4Fe-4S] cluster contacts are provided by C46, C49, C54, C71, C113, C116, C119, C123, C143, C146, C149, and C153. 4Fe-4S ferredoxin-type domains lie at 104-133 and 134-163; these read TVAF…GANR and QIHT…ARVK.

It belongs to the 4Fe4S bacterial-type ferredoxin family. RnfB subfamily. As to quaternary structure, the complex is composed of six subunits: RnfA, RnfB, RnfC, RnfD, RnfE and RnfG. The cofactor is [4Fe-4S] cluster.

It is found in the cellular chromatophore membrane. Its function is as follows. Part of a membrane-bound complex that couples electron transfer with translocation of ions across the membrane. This Cereibacter sphaeroides (strain ATCC 17029 / ATH 2.4.9) (Rhodobacter sphaeroides) protein is Ion-translocating oxidoreductase complex subunit B.